The sequence spans 296 residues: Polyamine aminopropyltransferase (296 aa).

One can recognise a PABS domain in the interval 5-238 (ELWYETLHAN…GIMTFAWATQ (234 aa)). Position 33 (Gln33) interacts with S-methyl-5'-thioadenosine. Positions 64 and 88 each coordinate spermidine. Residues Glu108 and 140-141 (DG) each bind S-methyl-5'-thioadenosine. Asp158 serves as the catalytic Proton acceptor. 158 to 161 (DCTD) is a spermidine binding site. Residue Pro165 participates in S-methyl-5'-thioadenosine binding.

It belongs to the spermidine/spermine synthase family. Homodimer or homotetramer.

It localises to the cytoplasm. It carries out the reaction S-adenosyl 3-(methylsulfanyl)propylamine + putrescine = S-methyl-5'-thioadenosine + spermidine + H(+). It functions in the pathway amine and polyamine biosynthesis; spermidine biosynthesis; spermidine from putrescine: step 1/1. Catalyzes the irreversible transfer of a propylamine group from the amino donor S-adenosylmethioninamine (decarboxy-AdoMet) to putrescine (1,4-diaminobutane) to yield spermidine. In Yersinia pseudotuberculosis serotype O:1b (strain IP 31758), this protein is Polyamine aminopropyltransferase.